Reading from the N-terminus, the 901-residue chain is Probable inorganic carbon transporter subunit DabA (901 aa).

Zn(2+) contacts are provided by C424, D426, H606, and C621.

Belongs to the inorganic carbon transporter (TC 9.A.2) DabA family. As to quaternary structure, forms a complex with DabB. The cofactor is Zn(2+).

It is found in the cell membrane. Its function is as follows. Part of an energy-coupled inorganic carbon pump. The chain is Probable inorganic carbon transporter subunit DabA from Staphylococcus aureus (strain NCTC 8325 / PS 47).